A 153-amino-acid polypeptide reads, in one-letter code: Small ribosomal subunit protein uS12m (153 aa).

A mitochondrion-targeting transit peptide spans 1–20 (MLSRFMSNTWCTPLRQAQRL).

This sequence belongs to the universal ribosomal protein uS12 family. Component of the mitochondrial small ribosomal subunit (mt-SSU). Mature yeast 74S mitochondrial ribosomes consist of a small (37S) and a large (54S) subunit. The 37S small subunit contains a 15S ribosomal RNA (15S mt-rRNA) and 34 different proteins. The 54S large subunit contains a 21S rRNA (21S mt-rRNA) and 46 different proteins. uS12m forms part of the decoding center of the mt-SSU.

The protein resides in the mitochondrion. Its function is as follows. Component of the mitochondrial ribosome (mitoribosome), a dedicated translation machinery responsible for the synthesis of mitochondrial genome-encoded proteins, including at least some of the essential transmembrane subunits of the mitochondrial respiratory chain. The mitoribosomes are attached to the mitochondrial inner membrane and translation products are cotranslationally integrated into the membrane. uS12m is required for respiratory growth. In Saccharomyces cerevisiae (strain ATCC 204508 / S288c) (Baker's yeast), this protein is Small ribosomal subunit protein uS12m (MRPS12).